The chain runs to 269 residues: Gem-associated protein 2 (269 aa).

Ser-70 and Ser-155 each carry phosphoserine.

The protein belongs to the gemin-2 family. As to quaternary structure, monomer. Part of the core SMN complex that contains SMN1, GEMIN2/SIP1, DDX20/GEMIN3, GEMIN4, GEMIN5, GEMIN6, GEMIN7, GEMIN8 and STRAP/UNRIP. Part of the SMN-Sm complex that contains SMN1, GEMIN2/SIP1, DDX20/GEMIN3, GEMIN4, GEMIN5, GEMIN6, GEMIN7, GEMIN8, STRAP/UNRIP and the Sm proteins SNRPB, SNRPD1, SNRPD2, SNRPD3, SNRPE, SNRPF and SNRPG. Interacts with GEMIN5; the interaction is direct. Interacts (via C-terminus) with SMN1; the interaction is direct. Interacts with SNRPD1; the interaction is direct. Interacts with SNRPD2; the interaction is direct. Interacts (via N-terminus) with SNRPF; the interaction is direct. Interacts (via N-terminus) with SNRPE; the interaction is direct. Interacts (via N-terminus) with SNRPG; the interaction is direct.

The protein localises to the nucleus. It is found in the gem. It localises to the cytoplasm. Its function is as follows. The SMN complex catalyzes the assembly of small nuclear ribonucleoproteins (snRNPs), the building blocks of the spliceosome, and thereby plays an important role in the splicing of cellular pre-mRNAs. Most spliceosomal snRNPs contain a common set of Sm proteins SNRPB, SNRPD1, SNRPD2, SNRPD3, SNRPE, SNRPF and SNRPG that assemble in a heptameric protein ring on the Sm site of the small nuclear RNA to form the core snRNP (Sm core). In the cytosol, the Sm proteins SNRPD1, SNRPD2, SNRPE, SNRPF and SNRPG (5Sm) are trapped in an inactive 6S pICln-Sm complex by the chaperone CLNS1A that controls the assembly of the core snRNP. To assemble core snRNPs, the SMN complex accepts the trapped 5Sm proteins from CLNS1A. Binding of snRNA inside 5Sm ultimately triggers eviction of the SMN complex, thereby allowing binding of SNRPD3 and SNRPB to complete assembly of the core snRNP. Within the SMN complex, GEMIN2 constrains the conformation of 5Sm, thereby promoting 5Sm binding to snRNA containing the snRNP code (a nonameric Sm site and a 3'-adjacent stem-loop), thus preventing progression of assembly until a cognate substrate is bound. The sequence is that of Gem-associated protein 2 from Mus musculus (Mouse).